A 108-amino-acid polypeptide reads, in one-letter code: UPF0145 protein Patl_2194 (108 aa).

This sequence belongs to the UPF0145 family.

The polypeptide is UPF0145 protein Patl_2194 (Pseudoalteromonas atlantica (strain T6c / ATCC BAA-1087)).